We begin with the raw amino-acid sequence, 486 residues long: MAKITQTMISQLLAAVGGSSNVSKCGNCMTRLRLTLANNGVADQAVIKQIPGVMGVVESDEQFQIILGPGKAQQAAELMNKLIESVINGDVQEQAIASDTNDLSSVAAEQKKQMKSKQTSAVQRFLSKFATIFTPLIPGFIAAGLLLGFATLLEQMFVLEQTPSQFMLDLIAYMKVFGKGLFAFLSILIGYNAQQAFGGSGVNGAILASLFVLGYNPDATSGIYSGMSEFFGYTIDPRGNIIGVLLAAIIGAQVERKVREYMPDDLDMILTSVVTLLIMGVITFVVIMPIGGELFKGMSWLFLNLNDNPLGAAILAGLFLISVVFGIHQGFVPVYFALMEAQGFNSLFPILAMAGGGQVGASLALYFKAKKDAVLRTQVKGAIIPGILGIGEPLIYGVTLPRVKPFVTACIGGAAGGFFIGLVSYLGLPVGLNTVFGPSGIVAIPLMTSHSGIFAGMAVFVVGLLISYVVGFLATYFFGSKDVDLS.

Positions 1–89 (MAKITQTMIS…NKLIESVING (89 aa)) constitute a PTS EIIB type-1 domain. Cys28 (phosphocysteine intermediate; for EIIB activity) is an active-site residue. Residues 127 to 486 (SKFATIFTPL…FFGSKDVDLS (360 aa)) form the PTS EIIC type-1 domain. Helical transmembrane passes span 129–149 (FATI…LLGF), 170–190 (LIAY…ILIG), 196–216 (AFGG…LGYN), 230–250 (FFGY…AAII), 268–288 (MILT…VVIM), 312–332 (AAIL…QGFV), 347–367 (LFPI…ALYF), 381–401 (GAII…VTLP), 411–431 (IGGA…LPVG), and 453–473 (IFAG…VGFL).

Its subcellular location is the cell inner membrane. The enzyme catalyses N-acetyl-beta-D-muramate(out) + N(pros)-phospho-L-histidyl-[protein] = N-acetyl-beta-D-muramate 6-phosphate(in) + L-histidyl-[protein]. Its function is as follows. The phosphoenolpyruvate-dependent sugar phosphotransferase system (sugar PTS), a major carbohydrate active transport system, catalyzes the phosphorylation of incoming sugar substrates concomitantly with their translocation across the cell membrane. This system is involved in N-acetylmuramic acid (MurNAc) transport, yielding cytoplasmic MurNAc-6-P. Is also able to take up anhydro-N-acetylmuramic acid (anhMurNAc), but cannot phosphorylate the carbon 6, probably because of the 1,6-anhydro ring. This is PTS system N-acetylmuramic acid-specific EIIBC component (murP) from Vibrio vulnificus (strain CMCP6).